Reading from the N-terminus, the 459-residue chain is Methylenetetrahydrofolate--tRNA-(uracil-5-)-methyltransferase TrmFO (459 aa).

Position 15-20 (15-20) interacts with FAD; that stretch reads GAGLAG.

It belongs to the MnmG family. TrmFO subfamily. Requires FAD as cofactor.

It is found in the cytoplasm. The catalysed reaction is uridine(54) in tRNA + (6R)-5,10-methylene-5,6,7,8-tetrahydrofolate + NADH + H(+) = 5-methyluridine(54) in tRNA + (6S)-5,6,7,8-tetrahydrofolate + NAD(+). It carries out the reaction uridine(54) in tRNA + (6R)-5,10-methylene-5,6,7,8-tetrahydrofolate + NADPH + H(+) = 5-methyluridine(54) in tRNA + (6S)-5,6,7,8-tetrahydrofolate + NADP(+). Its function is as follows. Catalyzes the folate-dependent formation of 5-methyl-uridine at position 54 (M-5-U54) in all tRNAs. The sequence is that of Methylenetetrahydrofolate--tRNA-(uracil-5-)-methyltransferase TrmFO from Syntrophotalea carbinolica (strain DSM 2380 / NBRC 103641 / GraBd1) (Pelobacter carbinolicus).